We begin with the raw amino-acid sequence, 359 residues long: C-X-C chemokine receptor type 4 (359 aa).

Positions 1–23 (MEPISVSIYTSDNYSEEVGSGDY) are important for chemokine binding and signaling. The Extracellular segment spans residues 1 to 40 (MEPISVSIYTSDNYSEEVGSGDYDSNKEPCFRDENVHFNR). Position 9 is a sulfotyrosine (Y9). Residue N13 is glycosylated (N-linked (GlcNAc...) asparagine). Y14 is modified (sulfotyrosine). Residue S20 is glycosylated (O-linked (Xyl...) (chondroitin sulfate) serine). The residue at position 23 (Y23) is a Sulfotyrosine. Disulfide bonds link C30/C281 and C111/C193. Residues 41 to 65 (IFLPTIYFIIFLTGIVGNGLVILVM) traverse the membrane as a helical segment. Residues 66-79 (GYQKKLRSMTDKYR) are Cytoplasmic-facing. Residues 80–101 (LHLSVADLLFVITLPFWAVDAM) form a helical membrane-spanning segment. A chemokine binding region spans residues 96–99 (WAVD). Residues 102–112 (ADWYFGKFLCK) lie on the Extracellular side of the membrane. Residues 113–132 (AVHIIYTVNLYSSVLILAFI) form a helical membrane-spanning segment. The interval 115 to 119 (HIIYT) is chemokine binding. At 133–156 (SLDRYLAIVHATNSQRPRKLLAEK) the chain is on the cytoplasmic side. Positions 135–137 (DRY) match the Important for signaling motif. Residues 137–149 (YLAIVHATNSQRP) form an involved in dimerization; when bound to chemokine region. Residues 157–176 (AVYVGVWIPALLLTIPDFIF) traverse the membrane as a helical segment. Topologically, residues 177–202 (ADVSQGDISQGDDRYICDRLYPDSLW) are extracellular. The interval 193 to 197 (CDRLY) is chemokine binding, important for signaling. The interval 198–217 (PDSLWMVVFQFQHIMVGLIL) is involved in dimerization. Residues 203-223 (MVVFQFQHIMVGLILPGIVIL) traverse the membrane as a helical segment. Residues 224–248 (SCYCIIISKLSHSKGHQKRKALKTT) are Cytoplasmic-facing. Residues 249 to 268 (VILILAFFACWLPYYVGISI) traverse the membrane as a helical segment. Residues 269–289 (DSFILLGVIKQGCDFESIVHK) are Extracellular-facing. The interval 273-275 (LLG) is involved in dimerization. Residues 290–309 (WISITEALAFFHCCLNPILY) traverse the membrane as a helical segment. Residues 310–359 (AFLGAKFKSSAQHALNSMSRGSSLKILSKGKRGGHSSVSTESESSSFHSS) lie on the Cytoplasmic side of the membrane. Phosphoserine is present on residues S326 and S328. 2 positions are modified to phosphoserine; by PKC and GRK6: S331 and S332. The disordered stretch occupies residues 335–359 (ILSKGKRGGHSSVSTESESSSFHSS). A Phosphoserine; by GRK6 modification is found at S337. K338 participates in a covalent cross-link: Glycyl lysine isopeptide (Lys-Gly) (interchain with G-Cter in ubiquitin). Low complexity predominate over residues 344 to 359 (HSSVSTESESSSFHSS). S346 carries the post-translational modification Phosphoserine; by GRK6. Phosphoserine occurs at positions 355 and 358.

Belongs to the G-protein coupled receptor 1 family. As to quaternary structure, monomer. Can form homodimers. Interacts with CD164. Interacts with ARRB2; the interaction is dependent on the C-terminal phosphorylation of CXCR4 and allows activation of MAPK1 and MAPK3. Interacts with ARR3; the interaction is dependent on the C-terminal phosphorylation of CXCR4 and modulates calcium mobilization. Interacts with RNF113A; the interaction, enhanced by CXCL12, promotes CXCR4 ubiquitination and subsequent degradation. Interacts (via the cytoplasmic C-terminal) with ITCH (via the WW domains I and II); the interaction, enhanced by CXCL12, promotes CXCR4 ubiquitination and leads to its degradation. Interacts with extracellular ubiquitin. Interacts with DBN1; this interaction is enhanced by antigenic stimulation. Following LPS binding, may form a complex with GDF5, HSP90AA1 and HSPA8. In terms of processing, phosphorylated on agonist stimulation. Rapidly phosphorylated on serine and threonine residues in the C-terminal. Phosphorylation at Ser-331 and Ser-332 leads to recruitment of ITCH, ubiquitination and protein degradation. Ubiquitinated after ligand binding, leading to its degradation. Ubiquitinated by ITCH at the cell membrane on agonist stimulation. The ubiquitin-dependent mechanism, endosomal sorting complex required for transport (ESCRT), then targets CXCR4 for lysosomal degradation. This process is dependent also on prior Ser-/Thr-phosphorylation in the C-terminal of CXCR4. Also binding of ARRB1 to STAM negatively regulates CXCR4 sorting to lysosomes though modulating ubiquitination of SFR5S. Post-translationally, sulfation is required for efficient binding of CXCL12/SDF-1alpha and promotes its dimerization. In terms of processing, O- and N-glycosylated. N-glycosylation can mask coreceptor function. The O-glycosylation chondroitin sulfate attachment does not affect interaction with CXCL12/SDF-1alpha nor its coreceptor activity. Lymphocytes, macrophages, neutrophils, microglial cells and astrocytes. Found in spleen, thymus, bone marrow, lymph nodes and, at lower levels in brain, small intestine, stomach and kidney. CXCR4-A is predominant in all tissues tested. During embryonic development, high levels are detected in the endothelium of developing blood vessels and in many regions of the developing brain including the olfactory epithelium, olfactory bulb, hippocampus, cerebellum and spinal cord.

Its subcellular location is the cell membrane. It is found in the cell junction. It localises to the early endosome. The protein localises to the late endosome. The protein resides in the lysosome. In terms of biological role, receptor for the C-X-C chemokine CXCL12/SDF-1 that transduces a signal by increasing intracellular calcium ion levels and enhancing MAPK1/MAPK3 activation. Involved in the AKT signaling cascade. Plays a role in regulation of cell migration, e.g. during wound healing. Acts as a receptor for extracellular ubiquitin; leading to enhanced intracellular calcium ions and reduced cellular cAMP levels. Binds bacterial lipopolysaccharide (LPS) et mediates LPS-induced inflammatory response, including TNF secretion by monocytes. Involved in hematopoiesis and in cardiac ventricular septum formation. Also plays an essential role in vascularization of the gastrointestinal tract, probably by regulating vascular branching and/or remodeling processes in endothelial cells. Involved in cerebellar development. In the CNS, could mediate hippocampal-neuron survival. This Mus musculus (Mouse) protein is C-X-C chemokine receptor type 4 (Cxcr4).